Here is a 529-residue protein sequence, read N- to C-terminus: tRNA pseudouridine synthase Pus10 (529 aa).

Residues C21 and C24 each contribute to the Zn(2+) site. Residues 42–89 adopt a coiled-coil conformation; the sequence is KELLNELQKFLETEKDELILEVMNPPPKKIRLQELEDSIDNLSQNGEG. 2 positions are modified to phosphoserine: S79 and S84. The Zn(2+) site is built by C109 and C112. The segment at 304–317 is RNA binding forefinger loop; that stretch reads TPWIIDGERKLESS. The active-site Nucleophile is D344. Residues 442–457 are RNA binding thumb loop; that stretch reads QKTPLRVLHRRPLAVR.

Belongs to the pseudouridine synthase Pus10 family. In terms of assembly, interacts with components of the microprocessor complex DROSHA and DGCR8. Proteolytically cleaved during TRAIL-induced cell death. Cleaved, in vitro, either by caspase-3 (CASP3) or caspase-8 (CASP8).

The protein localises to the nucleus. It is found in the cytoplasm. The protein resides in the mitochondrion. It catalyses the reaction uridine(55) in tRNA = pseudouridine(55) in tRNA. The enzyme catalyses uridine(54) in tRNA = pseudouridine(54) in tRNA. In terms of biological role, protein with different functions depending on its subcellular location: involved in miRNA processing in the nucleus and acts as a tRNA pseudouridylate synthase in the cytoplasm. In the cytoplasm, acts as a pseudouridylate synthase by catalyzing synthesis of pseudouridine(54) and pseudouridine(55) from uracil-54 and uracil-55, respectively, in the psi GC loop of a subset of tRNAs. tRNA pseudouridylate synthase activity is enhanced by the presence of 1-methyladenosine at position 53-61 of tRNAs. Does not show tRNA pseudouridylate synthase activity in the nucleus. In the nucleus, promotes primary microRNAs (pri-miRNAs) processing independently of its RNA pseudouridylate synthase activity. Binds pri-miRNAs. Modulator of TRAIL/TNFSF10-induced cell death via activation of procaspase-8 and BID cleavage. Required for the progression of the apoptotic signal through intrinsic mitochondrial cell death. This chain is tRNA pseudouridine synthase Pus10, found in Homo sapiens (Human).